Here is a 261-residue protein sequence, read N- to C-terminus: Glucosamine-6-phosphate deaminase (261 aa).

The active-site Proton acceptor; for enolization step is the aspartate 67. Asparagine 136 serves as the catalytic For ring-opening step. The Proton acceptor; for ring-opening step role is filled by histidine 138. The active-site For ring-opening step is the glutamate 143.

The protein belongs to the glucosamine/galactosamine-6-phosphate isomerase family. NagB subfamily.

The enzyme catalyses alpha-D-glucosamine 6-phosphate + H2O = beta-D-fructose 6-phosphate + NH4(+). It functions in the pathway amino-sugar metabolism; N-acetylneuraminate degradation; D-fructose 6-phosphate from N-acetylneuraminate: step 5/5. Catalyzes the reversible isomerization-deamination of glucosamine 6-phosphate (GlcN6P) to form fructose 6-phosphate (Fru6P) and ammonium ion. The sequence is that of Glucosamine-6-phosphate deaminase from Cutibacterium acnes (strain DSM 16379 / KPA171202) (Propionibacterium acnes).